The following is a 152-amino-acid chain: UPF0225 protein YchJ (152 aa).

The protein belongs to the UPF0225 family.

The sequence is that of UPF0225 protein YchJ from Shigella dysenteriae serotype 1 (strain Sd197).